A 205-amino-acid polypeptide reads, in one-letter code: GTP-binding protein yptV5 (205 aa).

Glycine 15–threonine 22 is a GTP binding site. The Effector region motif lies at tyrosine 37 to phenylalanine 45. GTP contacts are provided by residues aspartate 63–glutamine 67 and asparagine 125–aspartate 128. Residues cysteine 204 and cysteine 205 are each lipidated (S-geranylgeranyl cysteine).

This sequence belongs to the small GTPase superfamily. Rab family.

Its subcellular location is the cell membrane. In terms of biological role, protein transport. Probably involved in vesicular traffic. The chain is GTP-binding protein yptV5 (YPTV5) from Volvox carteri (Green alga).